The chain runs to 49 residues: Large ribosomal subunit protein bL33 (49 aa).

This sequence belongs to the bacterial ribosomal protein bL33 family.

The protein is Large ribosomal subunit protein bL33 of Natranaerobius thermophilus (strain ATCC BAA-1301 / DSM 18059 / JW/NM-WN-LF).